The chain runs to 239 residues: Lactate utilization protein A (239 aa).

It belongs to the LutA/YkgE family.

Functionally, is involved in L-lactate degradation and allows cells to grow with lactate as the sole carbon source. This is Lactate utilization protein A from Bacillus cereus (strain G9842).